The following is a 128-amino-acid chain: Large ribosomal subunit protein bL19 (128 aa).

It belongs to the bacterial ribosomal protein bL19 family.

This protein is located at the 30S-50S ribosomal subunit interface and may play a role in the structure and function of the aminoacyl-tRNA binding site. The polypeptide is Large ribosomal subunit protein bL19 (Verminephrobacter eiseniae (strain EF01-2)).